We begin with the raw amino-acid sequence, 424 residues long: Zona pellucida sperm-binding protein 3 (424 aa).

The first 22 residues, 1 to 22 (MELSYRLFICLLLWGSTELCYP), serve as a signal peptide directing secretion. Q23 carries the post-translational modification Pyrrolidone carboxylic acid. The Extracellular portion of the chain corresponds to 23–387 (QPLWLLQGGA…QWALPSDTSV (365 aa)). A ZP domain is found at 45-307 (ECQEATLMVM…KACSFSKPSN (263 aa)). Cystine bridges form between C46–C140 and C78–C99. N-linked (GlcNAc...) asparagine glycans are attached at residues N125 and N147. O-linked (GalNAc...) threonine glycosylation is found at T156, T162, and T163. 2 disulfides stabilise this stretch: C217–C282 and C239–C300. N-linked (GlcNAc...) asparagine glycosylation occurs at N272. Residues 330-356 (PSHSRRQPHVMSQWSRSASRNRRHVTE) form a disordered region. The propeptide at 351–424 (RRHVTEEADV…TASHPVSASE (74 aa)) is removed in mature form. A helical membrane pass occupies residues 388–408 (VLLGVGLAVVVSLTLTAVILV). Topologically, residues 409–424 (LTRRCRTASHPVSASE) are cytoplasmic.

It belongs to the ZP domain family. ZPC subfamily. As to quaternary structure, polymers of ZP2 and ZP3 organized into long filaments cross-linked by ZP1 homodimers. Interacts with ZP1 and ZP2. Post-translationally, proteolytically cleaved before the transmembrane segment to yield the secreted ectodomain incorporated in the zona pellucida. N-glycosylated. In terms of processing, O-glycosylated; removal of O-linked glycans may play an important role in the post-fertilization block to polyspermy. In terms of tissue distribution, expressed in oocytes (at protein level).

The protein resides in the zona pellucida. It localises to the cell membrane. Its function is as follows. Component of the zona pellucida, an extracellular matrix surrounding oocytes which mediates sperm binding, induction of the acrosome reaction and prevents post-fertilization polyspermy. The zona pellucida is composed of 3 to 4 glycoproteins, ZP1, ZP2, ZP3, and ZP4. ZP3 is essential for sperm binding and zona matrix formation. The sequence is that of Zona pellucida sperm-binding protein 3 (ZP3) from Homo sapiens (Human).